The primary structure comprises 451 residues: Medium-chain fatty acid ethyl ester synthase/esterase 2 (451 aa).

Lysine 114 participates in a covalent cross-link: Glycyl lysine isopeptide (Lys-Gly) (interchain with G-Cter in ubiquitin). An AB hydrolase-1 domain is found at 166 to 430 (PLVVILHGLA…GGHLAYLDKD (265 aa)). Residues serine 247, aspartate 395, and histidine 423 each act as charge relay system in the active site.

This sequence belongs to the AB hydrolase superfamily. AB hydrolase 4 family.

It catalyses the reaction an aliphatic alcohol + acetyl-CoA = an acetyl ester + CoA. In terms of biological role, displays enzymatic activity both for medium-chain fatty acid (MCFA) ethyl ester synthesis and hydrolysis (esterase activity). MCFA are toxic for yeast and this enzyme could thus be involved in their detoxification by esterification. The sequence is that of Medium-chain fatty acid ethyl ester synthase/esterase 2 (EHT1) from Saccharomyces cerevisiae (strain ATCC 204508 / S288c) (Baker's yeast).